Consider the following 662-residue polypeptide: MSSRPPASPPAQGSRLLLLSLLLLGTVPGPRPGSAFYLPGLAPVNFCAEEKSNECKADIELFVNRLDSVESVLPYEYTAFDFCQASEGKRPSENLGQVLFGERIEPSPYKFTFNKKETCKLVCTKTYNTEKAEDKQKLDFLKKSMLLNYQHHWIVDNMPVTWCYEVEDSQKFCNPGFPIGCYITDKGHAKDACVISSEFHERDTFYIFNHVDIKIYYHVVETGSMGARLVAAKLEPKSFKHTHIDKPDCSGPAMDISNKASGEIKIAYTYSISFEEEKNIRWASRWDYILESMPHTHIQWFSIMNSLVIVLFLSGMVAMIMLRTLHKDIARYNQMDSTEDAQEEFGWKLVHGDIFRPPRKGMLLSVFLGSGTQILIMTFVTLFFACLGFLSPANRGALMTCAVVLWVLLGTPAGYVAARFYKSFGGEKWKTNVLLTSFLCPGIVFADFFIMNLILWGEGSSAAIPFGTLVAILALWFCISVPLTFIGAYFGFKKNAIEHPVRTNQIPRQIPEQSFYTKPLPGIIMGGILPFGCIFIQLFFILNSIWSHQMYYMFGFLFLVFIILVITCSEATILLCYFHLCAEDYHWQWRSFLTSGFTAVYFLIYAIHYFFSKLQITGTASTILYFGYTMIMVLIFFLFTGTIGFFACFWFVTKIYSVVKVD.

The first 28 residues, 1–28 (MSSRPPASPPAQGSRLLLLSLLLLGTVP), serve as a signal peptide directing secretion. Topologically, residues 29–299 (GPRPGSAFYL…LESMPHTHIQ (271 aa)) are lumenal. Residues 300–320 (WFSIMNSLVIVLFLSGMVAMI) traverse the membrane as a helical segment. Over 321-373 (MLRTLHKDIARYNQMDSTEDAQEEFGWKLVHGDIFRPPRKGMLLSVFLGSGTQ) the chain is Cytoplasmic. The helical transmembrane segment at 374 to 394 (ILIMTFVTLFFACLGFLSPAN) threads the bilayer. Residues 395-397 (RGA) lie on the Lumenal side of the membrane. Residues 398 to 418 (LMTCAVVLWVLLGTPAGYVAA) form a helical membrane-spanning segment. Over 419-436 (RFYKSFGGEKWKTNVLLT) the chain is Cytoplasmic. Residues 437 to 457 (SFLCPGIVFADFFIMNLILWG) form a helical membrane-spanning segment. Topologically, residues 458–465 (EGSSAAIP) are lumenal. Residues 466–486 (FGTLVAILALWFCISVPLTFI) traverse the membrane as a helical segment. Topologically, residues 487-521 (GAYFGFKKNAIEHPVRTNQIPRQIPEQSFYTKPLP) are cytoplasmic. Residues 522–542 (GIIMGGILPFGCIFIQLFFIL) form a helical membrane-spanning segment. Residues 543-553 (NSIWSHQMYYM) are Lumenal-facing. Residues 554-574 (FGFLFLVFIILVITCSEATIL) form a helical membrane-spanning segment. Residues 575–590 (LCYFHLCAEDYHWQWR) are Cytoplasmic-facing. The chain crosses the membrane as a helical span at residues 591-611 (SFLTSGFTAVYFLIYAIHYFF). Over 612-630 (SKLQITGTASTILYFGYTM) the chain is Lumenal. Residues 631 to 651 (IMVLIFFLFTGTIGFFACFWF) traverse the membrane as a helical segment. The Cytoplasmic portion of the chain corresponds to 652–662 (VTKIYSVVKVD).

Belongs to the nonaspanin (TM9SF) (TC 9.A.2) family.

The protein localises to the endosome membrane. Its subcellular location is the golgi outpost. It localises to the cytoplasm. The protein resides in the cytoskeleton. It is found in the microtubule organizing center. Its function is as follows. In the intracellular compartments, may function as a channel or small molecule transporter. The chain is Transmembrane 9 superfamily member 2 (Tm9sf2) from Mus musculus (Mouse).